Reading from the N-terminus, the 581-residue chain is Cytosolic Fe-S cluster assembly factor nar-1 (581 aa).

The [4Fe-4S] cluster site is built by Cys20, Cys68, Cys71, Cys74, Cys215, Cys270, Cys457, and Cys461.

Belongs to the NARF family.

Its function is as follows. Component of the cytosolic Fe/S protein assembly machinery. Required for maturation of extramitochondrial Fe/S proteins. May play a role in the transfer of pre-assembled Fe/S clusters to target apoproteins. The polypeptide is Cytosolic Fe-S cluster assembly factor nar-1 (nar-1) (Neurospora crassa (strain ATCC 24698 / 74-OR23-1A / CBS 708.71 / DSM 1257 / FGSC 987)).